A 295-amino-acid polypeptide reads, in one-letter code: Phosphatidylglycerol--prolipoprotein diacylglyceryl transferase (295 aa).

Transmembrane regions (helical) follow at residues 28 to 48, 69 to 89, 101 to 121, and 131 to 151; these read WYAL…VLAT, LLTW…VLFY, ILMV…VVIA, and IPKL…LLLG. An a 1,2-diacyl-sn-glycero-3-phospho-(1'-sn-glycerol)-binding site is contributed by Arg-152. 3 consecutive transmembrane segments (helical) span residues 195–215, 224–244, and 268–288; these read QLYE…WLVW, GLIT…VEFF, and GLTM…WFVL.

Belongs to the Lgt family.

The protein localises to the cell inner membrane. It carries out the reaction L-cysteinyl-[prolipoprotein] + a 1,2-diacyl-sn-glycero-3-phospho-(1'-sn-glycerol) = an S-1,2-diacyl-sn-glyceryl-L-cysteinyl-[prolipoprotein] + sn-glycerol 1-phosphate + H(+). It functions in the pathway protein modification; lipoprotein biosynthesis (diacylglyceryl transfer). Its function is as follows. Catalyzes the transfer of the diacylglyceryl group from phosphatidylglycerol to the sulfhydryl group of the N-terminal cysteine of a prolipoprotein, the first step in the formation of mature lipoproteins. The polypeptide is Phosphatidylglycerol--prolipoprotein diacylglyceryl transferase (Ruegeria pomeroyi (strain ATCC 700808 / DSM 15171 / DSS-3) (Silicibacter pomeroyi)).